The chain runs to 184 residues: ATP synthase subunit b, chloroplastic (184 aa).

Residues 27–49 (LATNPINLSVVLGVLIFFGKGVL) form a helical membrane-spanning segment.

This sequence belongs to the ATPase B chain family. As to quaternary structure, F-type ATPases have 2 components, F(1) - the catalytic core - and F(0) - the membrane proton channel. F(1) has five subunits: alpha(3), beta(3), gamma(1), delta(1), epsilon(1). F(0) has four main subunits: a(1), b(1), b'(1) and c(10-14). The alpha and beta chains form an alternating ring which encloses part of the gamma chain. F(1) is attached to F(0) by a central stalk formed by the gamma and epsilon chains, while a peripheral stalk is formed by the delta, b and b' chains.

The protein resides in the plastid. Its subcellular location is the chloroplast thylakoid membrane. Its function is as follows. F(1)F(0) ATP synthase produces ATP from ADP in the presence of a proton or sodium gradient. F-type ATPases consist of two structural domains, F(1) containing the extramembraneous catalytic core and F(0) containing the membrane proton channel, linked together by a central stalk and a peripheral stalk. During catalysis, ATP synthesis in the catalytic domain of F(1) is coupled via a rotary mechanism of the central stalk subunits to proton translocation. In terms of biological role, component of the F(0) channel, it forms part of the peripheral stalk, linking F(1) to F(0). This is ATP synthase subunit b, chloroplastic from Chloranthus spicatus (Chulantree).